Reading from the N-terminus, the 141-residue chain is Large ribosomal subunit protein uL11 (141 aa).

This sequence belongs to the universal ribosomal protein uL11 family. Part of the ribosomal stalk of the 50S ribosomal subunit. Interacts with L10 and the large rRNA to form the base of the stalk. L10 forms an elongated spine to which L12 dimers bind in a sequential fashion forming a multimeric L10(L12)X complex. Post-translationally, one or more lysine residues are methylated.

In terms of biological role, forms part of the ribosomal stalk which helps the ribosome interact with GTP-bound translation factors. This is Large ribosomal subunit protein uL11 from Petrotoga mobilis (strain DSM 10674 / SJ95).